A 1606-amino-acid polypeptide reads, in one-letter code: MFPKSNLTVTCWVWRSMRKLFLLLSLLLSHAAHLEGKKDNQFIWKPGPWGRCTGDCGPGGVQSRAVWCFHVDGWTSHLSNCGESNRPPKERSCFRVCDWHSDLFQWEVSDWHHCVLVPYARGEVKPRTAECVTAQHGLQHRMVRCIQKLNRTVVANEICEHFALQPPTEQACLIPCPRDCVVSEFLPWSNCSKGCGKKLQHRTRAVIAPPLFGGLQCPNLTESRACDAPISCPLGEEEYTFSLKVGPWSKCRLPHLKEINPSGRTVLDFNSDSNERVTFKHQSYKAHHHSKSWAIEIGYQTRQVSCTRSDGQNAMLSLCLQDSFPLTVQSCIMPKDCETSQWSSWSPCSKTCRSGSLLPGFRSRSRNVKHMAIGGGKECPELLEKEACIVEGELLQQCPRYSWRTSEWKECQVSLLLEQQDPHWHVTGPVCGGGIQTREVYCAQSVPAAAALRAKEVSRPVEKALCVGPAPLPSQLCNIPCSTDCIVSSWSAWGLCIHENCHDPQGKKGFRTRQRHVLMESTGPAGHCPHLVESVPCEDPMCYRWLASEGICFPDHGKCGLGHRILKAVCQNDRGEDVSGSLCPVPPPPERKSCEIPCRMDCVLSEWTEWSSCSQSCSNKNSDGKQTRSRTILALAGEGGKPCPPSQALQEHRLCNDHSCMQLHWETSPWGPCSEDTLVTALNATIGWNGEATCGVGIQTRRVFCVKSHVGQVMTKRCPDSTRPETVRPCFLPCKKDCIVTAFSEWTPCPRMCQAGNATVKQSRYRIIIQEAANGGQECPDTLYEERECEDVSLCPVYRWKPQKWSPCILVPESVWQGITGSSEACGKGLQTRAVSCISDDNRSAEMMECLKQTNGMPLLVQECTVPCREDCTFTAWSKFTPCSTNCEATKSRRRQLTGKSRKKEKCQDSDLYPLVETELCPCDEFISQPYGNWSDCILPEGRREPHRGLRVQADSKECGEGLRFRAVACSDKNGRPVDPSFCSSSGYIQEKCVIPCPFDCKLSDWSSWGSCSSSCGIGVRIRSKWLKEKPYNGGRPCPKLDLKNQVHEAVPCYSECNQYSWVVEHWSSCKINNELRSLRCGGGTQSRKIRCVNTADGEGGAVDSNLCNQDEIPPETQSCSLMCPNECVMSEWGLWSKCPQSCDPHTMQRRTRHLLRPSLNSRTCAEDSQVQPCLLNENCFQFQYNLTEWSTCQLSENAPCGQGVRTRLLSCVCSDGKPVSMDQCEQHNLEKPQRMSIPCLVECVVNCQLSGWTAWTECSQTCGHGGRMSRTRFIIMPTQGEGRPCPTELTQEKTCPVTPCYSWVLGNWSACKLEGGDCGEGVQIRSLSCMVHSGSISHAAGRVEDALCGEMPFQDSILKQLCSVPCPGDCHLTEWSEWSTCELTCIDGRSFETVGRQSRSRTFIIQSFENQDSCPQQVLETRPCTGGKCYHYTWKASLWNNNERTVWCQRSDGVNVTGGCSPQARPAAIRQCIPACRKPFSYCTQGGVCGCEKGYTEIMKSNGFLDYCMKVPGSEDKKADVKNLSGKNRPVNSKIHDIFKGWSLQPLDPDGRVKIWVYGVSGGAFLIMIFLIFTSYLVCKKPKPHQSTPPQQKPLTLAYDGDLDM.

The first 31 residues, 1-31, serve as a signal peptide directing secretion; it reads MFPKSNLTVTCWVWRSMRKLFLLLSLLLSHA. Residues 32 to 1555 lie on the Extracellular side of the membrane; it reads AHLEGKKDNQ…QPLDPDGRVK (1524 aa). TSP type-1 domains are found at residues 40–98, 102–177, 179–233, 336–392, 399–482, 484–543, 601–661, 662–735, 737–796, 797–869, 871–924, 925–998, 1000–1125, 1127–1181, 1182–1245, 1247–1302, 1303–1368, and 1370–1431; these read NQFI…RVCD, DLFQ…IPCP, DCVV…ISCP, DCET…IVEG, PRYS…IPCS, DCIV…PMCY, DCVL…HSCM, QLHW…LPCK, DCIV…SLCP, VYRW…VPCR, DCTF…CPCD, EFIS…IPCP, DCKL…LMCP, ECVM…ENCF, QFQY…VECV, NCQL…TPCY, SWVL…VPCP, and DCHL…GKCY. Residues N150, N190, and N219 are each glycosylated (N-linked (GlcNAc...) asparagine). 3 disulfide bridges follow: C411-C477, C431-C481, and C442-C466. Intrachain disulfides connect C602–C643, C613–C617, and C655–C660. N-linked (GlcNAc...) asparagine glycosylation occurs at N683. Intrachain disulfides connect C738/C779, C749/C753, and C789/C795. Residue N757 is glycosylated (N-linked (GlcNAc...) asparagine). N842 carries an N-linked (GlcNAc...) asparagine glycan. Intrachain disulfides connect C872-C907, C883-C887, and C921-C923. An N-linked (GlcNAc...) asparagine glycan is attached at N933. Intrachain disulfides connect C937–C993, C959–C997, C970–C983, C1001–C1038, C1012–C1016, and C1120–C1124. A glycan (N-linked (GlcNAc...) asparagine) is linked at N1186. 3 disulfide bridges follow: C1248–C1286, C1259–C1263, and C1296–C1301. N1308 carries an N-linked (GlcNAc...) asparagine glycan. 3 disulfide bridges follow: C1371–C1415, C1382–C1386, and C1425–C1430. 2 N-linked (GlcNAc...) asparagine glycosylation sites follow: N1456 and N1524. Residues 1556–1576 form a helical membrane-spanning segment; the sequence is IWVYGVSGGAFLIMIFLIFTS. The Cytoplasmic segment spans residues 1577–1606; the sequence is YLVCKKPKPHQSTPPQQKPLTLAYDGDLDM. The interval 1583 to 1606 is disordered; sequence PKPHQSTPPQQKPLTLAYDGDLDM. Residues 1586 to 1595 show a composition bias toward polar residues; that stretch reads HQSTPPQQKP.

It localises to the membrane. The chain is Thrombospondin type-1 domain-containing protein 7B from Homo sapiens (Human).